The primary structure comprises 297 residues: Lipoprotein NlpD/LppB homolog (297 aa).

A signal peptide spans 1 to 22 (MDKGEGLRLAATLRQWTRLYGG). C23 is lipidated: N-palmitoyl cysteine. C23 carries S-diacylglycerol cysteine lipidation. The LysM domain occupies 67 to 111 (GQYIVRRGDTLYSIAFRFGWDWKALAARNGIAPPYTIQVGQAIQF). The interval 134 to 168 (TKPTPVPPAVSTSVPAKPAPAPASTTTPPSSGATP) is disordered.

This sequence belongs to the E.coli NlpD/Haemophilus LppB family.

The protein resides in the cell inner membrane. The sequence is that of Lipoprotein NlpD/LppB homolog from Pseudomonas aeruginosa (strain ATCC 15692 / DSM 22644 / CIP 104116 / JCM 14847 / LMG 12228 / 1C / PRS 101 / PAO1).